Consider the following 291-residue polypeptide: Tyramine--L-glutamate ligase (291 aa).

The ATP-grasp domain occupies 104-274 (KYPVKNLGCS…LAELLIKNAN (171 aa)). 131–176 (KDYVKTPKTFKPKKYVIKKIDGCGGKFNLFDENFLIQEFVEGESLS) contributes to the ATP binding site. Asp236, Glu247, and Asn249 together coordinate Mg(2+). Residues Asp236, Glu247, and Asn249 each contribute to the Mn(2+) site.

The cofactor is Mg(2+). Requires Mn(2+) as cofactor.

The catalysed reaction is tyramine + L-glutamate + ATP = gamma-L-glutamyltyramine + ADP + phosphate + H(+). The protein operates within cofactor biosynthesis; methanofuran biosynthesis. In terms of biological role, catalyzes the formation of an amide bond between tyramine and the gamma carboxy group of L-glutamate. The enzyme also accepts phenylethylamine in vitro. The chain is Tyramine--L-glutamate ligase from Methanocaldococcus fervens (strain DSM 4213 / JCM 15782 / AG86) (Methanococcus fervens).